The following is a 672-amino-acid chain: Beta-galactosidase bgaB (672 aa).

A substrate-binding site is contributed by arginine 109. Cysteine 113 serves as a coordination point for Zn(2+). Asparagine 147 serves as a coordination point for substrate. The Proton donor role is filled by glutamate 148. Zn(2+) contacts are provided by cysteine 156, cysteine 158, and cysteine 161. Catalysis depends on glutamate 303, which acts as the Nucleophile. Residues tryptophan 311 and 351–354 (EKFH) each bind substrate.

Belongs to the glycosyl hydrolase 42 family.

It catalyses the reaction Hydrolysis of terminal non-reducing beta-D-galactose residues in beta-D-galactosides.. With respect to regulation, by divalent metal ions. Fe(2+), Zn(2+), Cu(2+), Pb(2+) and Sn(2+) inhibit 52, 76.6, 85.3, 100 and 100% of the enzyme activity, respectively. Other metal cations and EDTA do not inhibit this enzyme. Thiol reagents 2-mercaptoethanol and dithiothreitol have no effect on the activity. Sulfhydryl group-blocking reagents p-chloromercuribenzoic acid and iodoacetic acid inhibit 86.2 and 74% of the enzyme activity, respectively. In terms of biological role, hydrolyzes 6-bromo-2-naphthyl-beta-D-galactopyranoside and o-nitrophenyl-beta-D-galactopyranoside (ONPG). Possesses a high level of transgalactosylation activity. Hydrolyzes lactose in milk. This chain is Beta-galactosidase bgaB (bgaB), found in Geobacillus kaustophilus.